The following is a 183-amino-acid chain: Probable chemoreceptor glutamine deamidase CheD (183 aa).

It belongs to the CheD family.

The catalysed reaction is L-glutaminyl-[protein] + H2O = L-glutamyl-[protein] + NH4(+). Its function is as follows. Probably deamidates glutamine residues to glutamate on methyl-accepting chemotaxis receptors (MCPs), playing an important role in chemotaxis. The sequence is that of Probable chemoreceptor glutamine deamidase CheD from Rhizobium meliloti (strain 1021) (Ensifer meliloti).